An 89-amino-acid polypeptide reads, in one-letter code: MKFVSVFLVLFIFFLVVLEAPEKIEAKDDKFICVVEYGGDVGPTFCNPKFFPTLCRQNCRSFKGAKGGKCVKQPKHKHIKCFCDYCKDD.

An N-terminal signal peptide occupies residues methionine 1–alanine 26. Disulfide bonds link cysteine 33/cysteine 86, cysteine 46/cysteine 70, cysteine 55/cysteine 81, and cysteine 59/cysteine 83.

Belongs to the DEFL family. Protease inhibitor I18 (RTI/MTI-2) subfamily.

The protein resides in the secreted. The polypeptide is Defensin-like protein 197 (ATTI6) (Arabidopsis thaliana (Mouse-ear cress)).